The following is a 285-amino-acid chain: Probable endonuclease 4 (285 aa).

Zn(2+) is bound by residues H69, H109, E145, D179, H182, H216, D229, H231, and E261.

Belongs to the AP endonuclease 2 family. The cofactor is Zn(2+).

The catalysed reaction is Endonucleolytic cleavage to 5'-phosphooligonucleotide end-products.. Functionally, endonuclease IV plays a role in DNA repair. It cleaves phosphodiester bonds at apurinic or apyrimidinic (AP) sites, generating a 3'-hydroxyl group and a 5'-terminal sugar phosphate. This Salmonella typhi protein is Probable endonuclease 4.